Here is a 138-residue protein sequence, read N- to C-terminus: Large ribosomal subunit protein uL16 (138 aa).

Over residues 1-13 (MLQPSRRKFRKEQ) the composition is skewed to basic residues. The segment at 1–22 (MLQPSRRKFRKEQKGRNTGIAT) is disordered.

This sequence belongs to the universal ribosomal protein uL16 family. Part of the 50S ribosomal subunit.

Functionally, binds 23S rRNA and is also seen to make contacts with the A and possibly P site tRNAs. This chain is Large ribosomal subunit protein uL16, found in Methylibium petroleiphilum (strain ATCC BAA-1232 / LMG 22953 / PM1).